A 435-amino-acid chain; its full sequence is Adenylosuccinate synthetase (435 aa).

Residues 11–17 (GDEGKGK) and 39–41 (GHT) contribute to the GTP site. Aspartate 12 (proton acceptor) is an active-site residue. Mg(2+)-binding residues include aspartate 12 and glycine 39. Residues 12-15 (DEGK), 37-40 (NAGH), threonine 128, arginine 142, glutamine 223, threonine 238, and arginine 302 each bind IMP. Histidine 40 (proton donor) is an active-site residue. 298–304 (SVTGRPR) contributes to the substrate binding site. Residues arginine 304, 330–332 (KLD), and 412–414 (STG) each bind GTP.

Belongs to the adenylosuccinate synthetase family. Homodimer. The cofactor is Mg(2+).

It is found in the cytoplasm. The catalysed reaction is IMP + L-aspartate + GTP = N(6)-(1,2-dicarboxyethyl)-AMP + GDP + phosphate + 2 H(+). It participates in purine metabolism; AMP biosynthesis via de novo pathway; AMP from IMP: step 1/2. Functionally, plays an important role in the de novo pathway of purine nucleotide biosynthesis. Catalyzes the first committed step in the biosynthesis of AMP from IMP. The polypeptide is Adenylosuccinate synthetase (Coxiella burnetii (strain RSA 493 / Nine Mile phase I)).